The sequence spans 248 residues: Triosephosphate isomerase (248 aa).

Residue 9 to 11 coordinates substrate; sequence NWK. Histidine 94 acts as the Electrophile in catalysis. Glutamate 166 serves as the catalytic Proton acceptor. Substrate-binding positions include glycine 172, serine 212, and 233 to 234; that span reads GG.

Belongs to the triosephosphate isomerase family. As to quaternary structure, homodimer.

It is found in the cytoplasm. The enzyme catalyses D-glyceraldehyde 3-phosphate = dihydroxyacetone phosphate. It functions in the pathway carbohydrate biosynthesis; gluconeogenesis. Its pathway is carbohydrate degradation; glycolysis; D-glyceraldehyde 3-phosphate from glycerone phosphate: step 1/1. Functionally, involved in the gluconeogenesis. Catalyzes stereospecifically the conversion of dihydroxyacetone phosphate (DHAP) to D-glyceraldehyde-3-phosphate (G3P). The polypeptide is Triosephosphate isomerase (Clostridium botulinum (strain Eklund 17B / Type B)).